A 318-amino-acid polypeptide reads, in one-letter code: MSKHKVPPAYGGQAVVEGVMFGGKHHYVTAIRRTDGSIDFFKLPRKHNPKLNIVKKIPFLRGIAAIIEASANGTKHLNFSSERYGLDPSEDETLEQEEKKSSGLSMYLSLAVIGVLSFLFSKFVFTLVPVFLAELTRPIFSLNTAQIAIESLFKLILLLGYIYFLSMTPLIKRVFQYHGAEHKVINCYEQNLPITVENVQNQSRLHYRCGSSFILFTIIVGMFVYLLVPTDPLWLRVIDRVALIPVVLGISFEVLQLTNKVRDIPGLKLLGYPGLWLQLLTTKEPKDEQVEVAIESFNELLRLEALSEQNQKPSHNVI.

The next 4 helical transmembrane spans lie at 112-132 (VIGV…PVFL), 147-167 (IAIE…FLSM), 209-229 (CGSS…LLVP), and 237-257 (VIDR…VLQL).

Its subcellular location is the cell membrane. This is an uncharacterized protein from Bacillus subtilis (strain 168).